The following is a 753-amino-acid chain: 5-methyltetrahydropteroyltriglutamate--homocysteine methyltransferase (753 aa).

5-methyltetrahydropteroyltri-L-glutamate is bound by residues 17–20 (RELK) and K117. L-homocysteine contacts are provided by residues 431–433 (IGS) and E484. L-methionine contacts are provided by residues 431 to 433 (IGS) and E484. Residues 515 to 516 (RC) and W561 each bind 5-methyltetrahydropteroyltri-L-glutamate. Residue D599 participates in L-homocysteine binding. An L-methionine-binding site is contributed by D599. E605 serves as a coordination point for 5-methyltetrahydropteroyltri-L-glutamate. Zn(2+) is bound by residues H641, C643, and E665. H694 (proton donor) is an active-site residue. C726 contributes to the Zn(2+) binding site.

This sequence belongs to the vitamin-B12 independent methionine synthase family. Requires Zn(2+) as cofactor.

The catalysed reaction is 5-methyltetrahydropteroyltri-L-glutamate + L-homocysteine = tetrahydropteroyltri-L-glutamate + L-methionine. The protein operates within amino-acid biosynthesis; L-methionine biosynthesis via de novo pathway; L-methionine from L-homocysteine (MetE route): step 1/1. In terms of biological role, catalyzes the transfer of a methyl group from 5-methyltetrahydrofolate to homocysteine resulting in methionine formation. This is 5-methyltetrahydropteroyltriglutamate--homocysteine methyltransferase from Klebsiella pneumoniae (strain 342).